Here is a 636-residue protein sequence, read N- to C-terminus: MTTQSATTATSHYFVENPSTRALVIGAIGVVFGDIGTSPLYSLKECFSKEHGIPFSPDAVLGIISLLFWAMTIVVSIKYVVFVMRADNNGEGGVLALMALVLRTAAPRSRWAKVLMMLGIFGACMFYGDAVITPAISVLSAVEGLEIATPQLSRFVIPITLVILVALFLIQRNGTSVVGKLFGPVMVVWFVTLGLLGLYNLVQAPEILKAFNPYYGISFLIAHSLQAFIVLGSVFLVLTGAEALYVDMGHFGARPIRYGWFVLVMPCLILNYFGQGAMLLTNPAGAENPFYLMVPEPLLIPMVVLATCATVIASQAVISGAFSLTSQAIQLGFVPRMRVRYTSAAEIGQIYLPVINWILLVLVVAVVISFKKSENLAAAYGIAVTTTMVITTFLAAVVMRNVWKWNPALVTLLGLSFLLVDLAFFAANLLKVAEGGWFPLLLGSTAFFLLMTWYSGRKLLRARSLEDGIPLEPFIAGLLAHPPHRVEGTAVFLTGNTESVPVSLLHNLKHNRVLHERVVFLSFVTRDIPYVDDEQRLSCKDLGGGVFILKSDYGFKETPDVHKVLDLAQRKLGMHFELMETSFFIARESVIPSKLPGMSMWRESLFAWMHQNGAKPSDFFQIPANRVVELGTKVEI.

A run of 12 helical transmembrane segments spans residues 23–43 (LVIGAIGVVFGDIGTSPLYSL), 63–83 (IISLLFWAMTIVVSIKYVVFV), 114–134 (VLMMLGIFGACMFYGDAVITP), 150–170 (PQLSRFVIPITLVILVALFLI), 182–202 (FGPVMVVWFVTLGLLGLYNLV), 217–237 (ISFLIAHSLQAFIVLGSVFLV), 260–280 (WFVLVMPCLILNYFGQGAMLL), 298–318 (LLIPMVVLATCATVIASQAVI), 350–370 (IYLPVINWILLVLVVAVVISF), 379–399 (AYGIAVTTTMVITTFLAAVVM), 407–427 (PALVTLLGLSFLLVDLAFFAA), and 432–452 (VAEGGWFPLLLGSTAFFLLMT).

It belongs to the HAK/KUP transporter (TC 2.A.72) family.

It localises to the cell inner membrane. The catalysed reaction is K(+)(in) + H(+)(in) = K(+)(out) + H(+)(out). Its function is as follows. Transport of potassium into the cell. Likely operates as a K(+):H(+) symporter. In Cupriavidus pinatubonensis (strain JMP 134 / LMG 1197) (Cupriavidus necator (strain JMP 134)), this protein is Probable potassium transport system protein Kup.